Consider the following 459-residue polypeptide: Glutathione reductase (459 aa).

Residues serine 14, glycine 15, glutamate 34, threonine 41, cysteine 42, lysine 50, and alanine 114 each contribute to the FAD site. Residue serine 14 coordinates glutathione. Cysteine 42 and cysteine 47 are disulfide-bonded. NADP(+) contacts are provided by isoleucine 177, glutamate 180, arginine 197, lysine 203, and glycine 262. FAD is bound by residues aspartate 313 and threonine 321. Arginine 329 contributes to the glutathione binding site. Residue alanine 351 participates in NADP(+) binding. Histidine 448 contributes to the FAD binding site. Catalysis depends on histidine 448, which acts as the Proton acceptor.

Belongs to the class-I pyridine nucleotide-disulfide oxidoreductase family. In terms of assembly, homodimer. Requires FAD as cofactor.

It localises to the cytoplasm. It carries out the reaction 2 glutathione + NADP(+) = glutathione disulfide + NADPH + H(+). Its function is as follows. Catalyzes the reduction of glutathione disulfide (GSSG) to reduced glutathione (GSH). Constitutes the major mechanism to maintain a high GSH:GSSG ratio in the cytosol. The protein is Glutathione reductase (gor) of Nostoc sp. (strain PCC 7120 / SAG 25.82 / UTEX 2576).